The chain runs to 492 residues: MSFTLAIVGRPNVGKSTLFNRLVGKRLALVDDQPGVTRDLREGAARLADLRFTVIDTAGLEDVTDDSLQGRMRRLTERAVDMADICLFMVDARVGITPTDLVFADILRKRAGHVVLAANKAEGAAADAGVIEAYSLGLGEPIRLSAEHGEGLNDLYTHLMPLADAYAERAAEDAPETDVALDEDSGDMEAALRMPTANKPLQVAVVGRPNAGKSTLVNQILGEDRLLTGPEAGITRDAISLRTDWVGPEGDVIPMRIFDTAGMRKKAKVQEKLEKLSVGDGLRAVKFAEVVVVLLDAAIPFEQQDLRIADLAEREGRAVVVAVNKWDIEENKQAKLNELRESFERLLPQLRGAPLVTVSARTGRGLDRLHKAVLRAYEVWNRRVTTAQLNRWLAGMLEAHPPPAPQGKRIKLRYMTQAKTRPPGFVVMCSHPDKVPDSYNRYLVNGLRLDFDMPGTPIRLWMRGQNDANPYKGRKKAPPSKLRKHTDGRRKD.

EngA-type G domains are found at residues F3–A167 and L201–N381. Residues G9–S16, D56–L60, N119–E122, G207–S214, D259–M263, and N324–D327 contribute to the GTP site. The KH-like domain maps to R382–A468. The interval M462 to D492 is disordered. Over residues K472–D492 the composition is skewed to basic residues.

This sequence belongs to the TRAFAC class TrmE-Era-EngA-EngB-Septin-like GTPase superfamily. EngA (Der) GTPase family. As to quaternary structure, associates with the 50S ribosomal subunit.

Its function is as follows. GTPase that plays an essential role in the late steps of ribosome biogenesis. In Roseobacter denitrificans (strain ATCC 33942 / OCh 114) (Erythrobacter sp. (strain OCh 114)), this protein is GTPase Der.